The chain runs to 119 residues: Holo-[acyl-carrier-protein] synthase (119 aa).

Residues D8 and E53 each contribute to the Mg(2+) site.

This sequence belongs to the P-Pant transferase superfamily. AcpS family. Mg(2+) is required as a cofactor.

Its subcellular location is the cytoplasm. It catalyses the reaction apo-[ACP] + CoA = holo-[ACP] + adenosine 3',5'-bisphosphate + H(+). Its function is as follows. Transfers the 4'-phosphopantetheine moiety from coenzyme A to a Ser of acyl-carrier-protein. The chain is Holo-[acyl-carrier-protein] synthase from Petrotoga mobilis (strain DSM 10674 / SJ95).